We begin with the raw amino-acid sequence, 1041 residues long: Cullin-associated NEDD8-dissociated protein 1, C-terminal part (1041 aa).

Disordered regions lie at residues 1–24 (MSSDAMSDYSHDDEHDPQTDELRE) and 64–103 (DMGEDEEMSGTQDDGSEDDVTEEPDLEDDDFEDFEEEGGY). Over residues 9 to 24 (YSHDDEHDPQTDELRE) the composition is skewed to basic and acidic residues. The segment covering 65–103 (MGEDEEMSGTQDDGSEDDVTEEPDLEDDDFEDFEEEGGY) has biased composition (acidic residues). The stretch at 138–176 (SLYQQIAPAIVARFNKEREESVKLELVSTMDALVRKTAE) is one HEAT 1 repeat. The disordered stretch occupies residues 189 to 237 (SVGSGSKISRKRRRQDSDASMIDFEPSMGTSSAAGTPLAAPSSPQSGPQ). The segment covering 225–237 (PLAAPSSPQSGPQ) has biased composition (low complexity). HEAT repeat units lie at residues 242 to 279 (NALPVIVRSLVTMWKQASIHLKQAIIILLKSLALVRYG), 339 to 376 (PFLIALIPGVIVAVNDKNYKVSSEALAAVEQIVKALTP), 434 to 472 (LSFEKRSKGLVTLVDRLKNETTRLSAVRAIDDVAVLCSR), 479 to 516 (NWVREVTAELGAQLRKSDRVLRSASLETLRSLSMNPNT), 525 to 560 (MKNLEECLIPLISVEDVHLLAPSLIIIAKLVPGNAQ), 598 to 637 (GSGLTLMQNLLQDVGVNGDTSVVGRSIGTLLVHGGSNVGV), 670 to 708 (GASCSLTPNVFIPHFNSKSEKVRLASATALGNAAAGNVK), 710 to 744 (YLPTILGGLEKSDPQSYLLLHSVKELLQHPEMVRR), 780 to 817 (LDPPAYIPQFQEYLANGDAGIRSIVVSAFRFTLSDSRD), and 822 to 867 (VLRP…HLGE).

It belongs to the CAND family. In terms of assembly, interacts with candA-N. Interacts with unneddylated cullins culA and culD.

It is found in the nucleus. Assembly factor of SCF (SKP1-CUL1-F-box protein) E3 ubiquitin ligase complexes that promotes the exchange of the substrate-recognition F-box subunit in SCF complexes, thereby playing a key role in the cellular repertoire of SCF complexes. Acts as a F-box protein exchange factor when interacting with candA-N. This chain is Cullin-associated NEDD8-dissociated protein 1, C-terminal part (candA-C), found in Emericella nidulans (strain FGSC A4 / ATCC 38163 / CBS 112.46 / NRRL 194 / M139) (Aspergillus nidulans).